The chain runs to 91 residues: Small ribosomal subunit protein uS19 (91 aa).

The protein belongs to the universal ribosomal protein uS19 family.

Protein S19 forms a complex with S13 that binds strongly to the 16S ribosomal RNA. The polypeptide is Small ribosomal subunit protein uS19 (Pseudomonas fluorescens (strain Pf0-1)).